The following is a 157-amino-acid chain: Putative low molecular weight protein-tyrosine-phosphatase slr0328 (157 aa).

The active-site Nucleophile is the Cys-7. Residue Arg-13 is part of the active site. The active-site Proton donor is the Asp-124.

Belongs to the low molecular weight phosphotyrosine protein phosphatase family.

The catalysed reaction is O-phospho-L-tyrosyl-[protein] + H2O = L-tyrosyl-[protein] + phosphate. The sequence is that of Putative low molecular weight protein-tyrosine-phosphatase slr0328 from Synechocystis sp. (strain ATCC 27184 / PCC 6803 / Kazusa).